The chain runs to 488 residues: Glutamyl-tRNA(Gln) amidotransferase subunit A (488 aa).

Residues lysine 77 and serine 152 each act as charge relay system in the active site. The active-site Acyl-ester intermediate is serine 176.

This sequence belongs to the amidase family. GatA subfamily. As to quaternary structure, heterotrimer of A, B and C subunits.

The catalysed reaction is L-glutamyl-tRNA(Gln) + L-glutamine + ATP + H2O = L-glutaminyl-tRNA(Gln) + L-glutamate + ADP + phosphate + H(+). Allows the formation of correctly charged Gln-tRNA(Gln) through the transamidation of misacylated Glu-tRNA(Gln) in organisms which lack glutaminyl-tRNA synthetase. The reaction takes place in the presence of glutamine and ATP through an activated gamma-phospho-Glu-tRNA(Gln). The chain is Glutamyl-tRNA(Gln) amidotransferase subunit A from Streptococcus sanguinis (strain SK36).